We begin with the raw amino-acid sequence, 3177 residues long: Proliferation marker protein Ki-67 (3177 aa).

In terms of domain architecture, FHA spans 27–76 (CLFGRSIECDIRIQLPVVSKRHCKIEVKEQEAILYNFSSTNPTQVNGVTI). Composition is skewed to basic and acidic residues over residues 98 to 107 (EDGNHEDGSK) and 116 to 126 (LGKEPSRRASR). 2 disordered regions span residues 98–442 (EDGN…PGLS) and 473–572 (RPEL…ASIS). Ser-125, Ser-128, and Ser-162 each carry phosphoserine. Polar residues-rich tracts occupy residues 165 to 177 (SDGSKNSVSQDSS) and 202 to 221 (STGSSYREPKSSPTQSLSNS). Positions 235 to 263 (MKEELDVKSQKSCRKSEPQPDRAAEESRE) are enriched in basic and acidic residues. A Glycyl lysine isopeptide (Lys-Gly) (interchain with G-Cter in SUMO2) cross-link involves residue Lys-236. 5 positions are modified to phosphoserine: Ser-250, Ser-276, Ser-277, Ser-286, and Ser-287. The span at 276–286 (SSGSTPVTAAS) shows a compositional bias: polar residues. Phosphothreonine is present on residues Thr-307 and Thr-316. A phosphoserine mark is found at Ser-321, Ser-337, Ser-373, Ser-498, Ser-503, and Ser-588. The segment at 455-618 (KSEGMPMKRR…VKQTQTKVAK (164 aa)) is positively charged patch (CP). The 48-residue stretch at 462-509 (KRRRVSFGGHLRPELFDENLPPNTPLKRGETPTKRKSLGTHSPAVLKT) folds into the PP1-binding domain. Residues 614 to 652 (TKVAKHVPQKQTSKRQRRPSTPKKPTSNLHNQFTTGHAN) are disordered. Over residues 616-634 (VAKHVPQKQTSKRQRRPST) the composition is skewed to basic residues. A compositionally biased stretch (polar residues) spans 636 to 652 (KKPTSNLHNQFTTGHAN). Thr-701 is subject to Phosphothreonine. 3 disordered regions span residues 793 to 815 (LEKKTPVSETEPLKTASSVSKLR), 835 to 901 (VLAE…LGSQ), and 956 to 989 (KHSPKTPGKKAQPLEGPAGLKEHFETPNPKDKPI). A compositionally biased stretch (polar residues) spans 855-864 (DQQVQDNENA). 2 stretches are compositionally biased toward basic and acidic residues: residues 867 to 882 (RCKESGELSEGSEKTS) and 975 to 989 (LKEHFETPNPKDKPI). K167R repeat units follow at residues 994 to 1101 (TRVL…FISP), 1108 to 1216 (KKIP…FQTP), 1228 to 1336 (SAKI…FQTP), 1348 to 1450 (SAKM…FQIP), 1461 to 1569 (KTKK…FQMP), 1582 to 1684 (TMLA…LFQT), 1696 to 1806 (KQTR…FQTP), 1817 to 1925 (ETTK…FQTP), 1937 to 2046 (SAKI…FQTP), 2059 to 2163 (VKMS…FQTP), 2175 to 2284 (SAKM…FQTP), 2296 to 2405 (SAKI…VFQT), 2419 to 2526 (AKLP…CQAP), 2537 to 2639 (KTPK…SFQE), 2643 to 2748 (KRIS…PIQT), and 2762 to 2870 (TQMP…ITQI). Residues Lys-1013 and Lys-1026 each participate in a glycyl lysine isopeptide (Lys-Gly) (interchain with G-Cter in SUMO2) cross-link. Ser-1062 carries the post-translational modification Phosphoserine. Lys-1082 is covalently cross-linked (Glycyl lysine isopeptide (Lys-Gly) (interchain with G-Cter in SUMO1); alternate). A Glycyl lysine isopeptide (Lys-Gly) (interchain with G-Cter in SUMO2); alternate cross-link involves residue Lys-1082. Disordered regions lie at residues 1109-1321 (KIPS…IRAQ) and 1334-1410 (QTPA…ENDC). Position 1114 is a phosphoserine (Ser-1114). The segment covering 1114-1127 (SPHTQPVRTPASTK) has biased composition (polar residues). Thr-1122 is modified (phosphothreonine). Ser-1125 is subject to Phosphoserine. A Phosphothreonine modification is found at Thr-1150. Phosphoserine is present on Ser-1152. Phosphothreonine occurs at positions 1159 and 1175. At Ser-1189 the chain carries Phosphoserine. Thr-1215 is subject to Phosphothreonine. Ser-1235 is modified (phosphoserine). Residues Thr-1243, Thr-1279, Thr-1295, Thr-1307, and Thr-1315 each carry the phosphothreonine modification. Positions 1308–1317 (GHKRRPRTPK) are enriched in basic residues. Lys-1317 is covalently cross-linked (Glycyl lysine isopeptide (Lys-Gly) (interchain with G-Cter in SUMO2)). Residue Thr-1335 is modified to Phosphothreonine. Positions 1353 to 1368 (LESSQAEPVKTPASTK) are enriched in polar residues. Ser-1356 is subject to Phosphoserine. At Thr-1363 the chain carries Phosphothreonine. Phosphoserine is present on Ser-1366. Basic and acidic residues predominate over residues 1371–1384 (SKTDLSKVDVREDP). Phosphothreonine occurs at positions 1400 and 1416. Position 1469 is a phosphoserine (Ser-1469). Thr-1477 is subject to Phosphothreonine. Position 1480 is a phosphoserine (Ser-1480). Phosphothreonine is present on Thr-1513. The disordered stretch occupies residues 1526 to 1550 (RKPAKRKLDSTAGMPNSKRMRCSSK). Phosphoserine occurs at positions 1542 and 1587. At Lys-1609 the chain carries N6-acetyllysine. Lys-1668 participates in a covalent cross-link: Glycyl lysine isopeptide (Lys-Gly) (interchain with G-Cter in SUMO2). Phosphothreonine occurs at positions 1684 and 1712. Ser-1734 bears the Phosphoserine mark. Positions 1749 to 1797 (IPIGPEDDTENKGVKESTPQTLDSSASRTVSKRQQGAHEERPQFSGDLF) are disordered. Residues 1765–1782 (STPQTLDSSASRTVSKRQ) are compositionally biased toward polar residues. A Phosphothreonine modification is found at Thr-1766. Ser-1779 is subject to Phosphoserine. Thr-1805 is modified (phosphothreonine). Ser-1825 carries the phosphoserine modification. Phosphothreonine occurs at positions 1859, 1868, 1884, and 1924. A disordered region spans residues 1925–2033 (PAGASDPVSV…QTPKIRAQPL (109 aa)). The residue at position 1944 (Ser-1944) is a Phosphoserine. Lys-1966 is modified (N6-acetyllysine). 3 positions are modified to phosphothreonine: Thr-1989, Thr-2005, and Thr-2025. Lys-2027 is covalently cross-linked (Glycyl lysine isopeptide (Lys-Gly) (interchain with G-Cter in SUMO1); alternate). A Glycyl lysine isopeptide (Lys-Gly) (interchain with G-Cter in SUMO2); alternate cross-link involves residue Lys-2027. Thr-2045 carries the post-translational modification Phosphothreonine. Residues 2047–2112 (AGANDSVTVE…SPGTPAPVQE (66 aa)) are disordered. Over residues 2063-2078 (LESSQAEPVKTPASTK) the composition is skewed to polar residues. At Ser-2065 the chain carries Phosphoserine. Thr-2073 is subject to Phosphothreonine. Ser-2076, Ser-2095, and Ser-2103 each carry phosphoserine. The segment covering 2088–2101 (VDVREDPSILEKKT) has biased composition (basic and acidic residues). Phosphothreonine occurs at positions 2106 and 2122. The tract at residues 2124 to 2343 (KQKLDFTGNS…PLSKSSCASQ (220 aa)) is disordered. Basic residues predominate over residues 2135–2144 (GHKRRPRTPK). Thr-2162 is subject to Phosphothreonine. Over residues 2180 to 2195 (LESSQAKPVKTPASTK) the composition is skewed to polar residues. At Ser-2182 the chain carries Phosphoserine. Thr-2190 is modified (phosphothreonine). At Ser-2198 the chain carries Phosphoserine. The residue at position 2218 (Thr-2218) is a Phosphothreonine. Ser-2220 carries the post-translational modification Phosphoserine. Thr-2227, Thr-2243, and Thr-2283 each carry phosphothreonine. Ser-2303 carries the post-translational modification Phosphoserine. Thr-2311 and Thr-2348 each carry phosphothreonine. Residues 2378–2390 (RGKRQQRSCKKRS) are compositionally biased toward basic residues. The segment at 2378–2447 (RGKRQQRSCK…RRQARTGLRK (70 aa)) is disordered. 2 positions are modified to phosphoserine: Ser-2390 and Ser-2392. Thr-2405 bears the Phosphothreonine mark. Residues Ser-2423 and Ser-2425 each carry the phosphoserine modification. A Glycyl lysine isopeptide (Lys-Gly) (interchain with G-Cter in SUMO1) cross-link involves residue Lys-2451. Residues Ser-2464, Ser-2487, Ser-2545, and Ser-2592 each carry the phosphoserine modification. Positions 2538-2547 (TPKMPDKSPE) are enriched in basic and acidic residues. Disordered regions lie at residues 2538–2828 (TPKM…QVSK) and 2879–3160 (HDTS…DAKT). Positions 2605-2622 (VQKQDPSVSLTGRRNQPR) are enriched in polar residues. Ser-2649 bears the Phosphoserine mark. Composition is skewed to basic and acidic residues over residues 2673-2697 (GVKEEPTAQRKQPSRETRNTLKEPV) and 2704-2714 (EEVKKSTKQKI). A Glycyl lysine isopeptide (Lys-Gly) (interchain with G-Cter in SUMO1); alternate cross-link involves residue Lys-2675. A Glycyl lysine isopeptide (Lys-Gly) (interchain with G-Cter in SUMO2); alternate cross-link involves residue Lys-2675. 2 stretches are compositionally biased toward polar residues: residues 2764–2781 (MPCNSLQPEQVDSFQSSP) and 2883–2892 (ILKSTQQQKP). A phosphoserine mark is found at Ser-2768 and Ser-2780. The span at 2907–2923 (ASKEDPKEVLVDTRDHA) shows a compositional bias: basic and acidic residues. Lys-2909 participates in a covalent cross-link: Glycyl lysine isopeptide (Lys-Gly) (interchain with G-Cter in SUMO2). The residue at position 2928 (Lys-2928) is an N6-acetyllysine. Residues 2959-2971 (EATDEKPVPEKKR) show a composition bias toward basic and acidic residues. 2973–2980 (ASSKRHVS) contacts ATP. Position 2980 is a phosphoserine (Ser-2980). A compositionally biased stretch (basic and acidic residues) spans 3008 to 3018 (KTEEMEAKREN). Thr-3021 is modified (phosphothreonine). Positions 3039–3057 (PKFDASAENVGIKKNEKTM) are enriched in basic and acidic residues. A compositionally biased stretch (polar residues) spans 3058–3067 (KTASQETELQ). At Ser-3061 the chain carries Phosphoserine. 2 stretches are compositionally biased toward basic and acidic residues: residues 3118-3132 (PQEEKGVSGESDVRC) and 3140-3160 (VALDSEPKPRVTRGTKKDAKT).

As to quaternary structure, interacts with KIF15. Interacts (via the FHA domain) with NIFK. Interacts with PPP1CC. Component of a complex at least composed of ZNF335, HCFC1, CCAR2, EMSY, MKI67, RBBP5, ASH2L and WDR5; the complex is formed as a result of interactions between components of a nuclear receptor-mediated transcription complex and a histone methylation complex. Interacts with ZNF335. Post-translationally, hyperphosphorylated by CDK1 in mitosis; hyperphosphorylatiom prevents undergoing liquid-liquid phase separation. Dephosphorylated by PPP1CC at the onset of anaphase. Dephosphorylation by protein phosphatase 2A (PP2A) and simultaneous exposure of the positively charged patch (CP) during mitotic exit induce the RNA-dependent formation of a liquid-like condensed phase on the chromosome surface. Ubiquitinated by the APC/C complex after neuronal progenitors exit mitosis during brain development, leading to clearance from constitutive heterochromatin. As to expression, mainly present in proliferating cells (at protein level).

The protein localises to the chromosome. It is found in the nucleus. It localises to the nucleolus. Its function is as follows. Protein that associates with the surface of mitotic chromosomes and acts both as a chromosome repellent during early mitosis and chromosome attractant during late mitosis. Required to maintain individual mitotic chromosomes dispersed in the cytoplasm following nuclear envelope disassembly. During early mitosis, relocalizes from nucleoli to the chromosome surface where it forms extended brush structures that cover a substantial fraction of the chromosome surface. The MKI67 brush structure prevents chromosomes from collapsing into a single chromatin mass by forming a steric and electrostatic charge barrier: the protein has a high net electrical charge and acts as a surfactant, dispersing chromosomes and enabling independent chromosome motility. During mitotic anaphase, the MKI67 brush structure collapses and MKI67 switches from a chromosome repellent to a chromosome attractant to promote chromosome clustering and facilitate the exclusion of large cytoplasmic particles from the future nuclear space. Mechanistically, dephosphorylation during mitotic exit and simultaneous exposure of a conserved basic patch induce the RNA-dependent formation of a liquid-like condensed phase on the chromosome surface, promoting coalescence of neighboring chromosome surfaces and clustering of chromosomes. Binds premature ribosomal RNAs during anaphase; promoting liquid-liquid phase separation. Binds DNA, with a preference for supercoiled DNA and AT-rich DNA. Does not contribute to the internal structure of mitotic chromosomes. May play a role in chromatin organization; it is however unclear whether it plays a direct role in chromatin organization or whether it is an indirect consequence of its function in mitotic chromosome. In Mus musculus (Mouse), this protein is Proliferation marker protein Ki-67.